We begin with the raw amino-acid sequence, 140 residues long: Sex-regulated protein janus-B (140 aa).

Arg-42 lines the substrate pocket. His-69 functions as the Proton acceptor in the catalytic mechanism. 110-112 (SRT) lines the substrate pocket.

It belongs to the janus family.

Functionally, janA and janB regulate somatic sex differentiation. The protein is Sex-regulated protein janus-B (janB) of Drosophila yakuba (Fruit fly).